The sequence spans 278 residues: NADPH-dependent 7-cyano-7-deazaguanine reductase (278 aa).

A substrate-binding site is contributed by 87 to 89 (IES). 89–90 (SK) is a binding site for NADPH. Cys-185 (thioimide intermediate) is an active-site residue. The active-site Proton donor is the Asp-192. 224-225 (HE) serves as a coordination point for substrate. 253-254 (RG) provides a ligand contact to NADPH. The tract at residues 255-278 (GLDINPYRSTNPTFSVQNHRSFRQ) is disordered. Over residues 261 to 278 (YRSTNPTFSVQNHRSFRQ) the composition is skewed to polar residues.

It belongs to the GTP cyclohydrolase I family. QueF type 2 subfamily. As to quaternary structure, homodimer.

It localises to the cytoplasm. The catalysed reaction is 7-aminomethyl-7-carbaguanine + 2 NADP(+) = 7-cyano-7-deazaguanine + 2 NADPH + 3 H(+). The protein operates within tRNA modification; tRNA-queuosine biosynthesis. Functionally, catalyzes the NADPH-dependent reduction of 7-cyano-7-deazaguanine (preQ0) to 7-aminomethyl-7-deazaguanine (preQ1). This Coxiella burnetii (strain CbuK_Q154) (Coxiella burnetii (strain Q154)) protein is NADPH-dependent 7-cyano-7-deazaguanine reductase.